A 496-amino-acid chain; its full sequence is Glutelin type-A 3 (496 aa).

An N-terminal signal peptide occupies residues 1-24 (MATIKFPIVFSVVCLFLLCNGSLA). 2 disulfides stabilise this stretch: cysteine 45-cysteine 78 and cysteine 121-cysteine 312. 2 Cupin type-1 domains span residues 50–248 (LQAF…GVAR) and 318–467 (QNID…EEAR).

This sequence belongs to the 11S seed storage protein (globulins) family. As to quaternary structure, hexamer; each subunit is composed of an acidic and a basic chain derived from a single precursor and linked by a disulfide bond.

Its function is as follows. Seed storage protein. This Oryza sativa subsp. japonica (Rice) protein is Glutelin type-A 3 (GLUA3).